Consider the following 557-residue polypeptide: DNA mismatch repair protein MutL (557 aa).

The protein belongs to the DNA mismatch repair MutL/HexB family.

In terms of biological role, this protein is involved in the repair of mismatches in DNA. It is required for dam-dependent methyl-directed DNA mismatch repair. May act as a 'molecular matchmaker', a protein that promotes the formation of a stable complex between two or more DNA-binding proteins in an ATP-dependent manner without itself being part of a final effector complex. This Methanothrix thermoacetophila (strain DSM 6194 / JCM 14653 / NBRC 101360 / PT) (Methanosaeta thermophila) protein is DNA mismatch repair protein MutL.